The chain runs to 443 residues: MNFMVLPPEVNSARIYAGAGPAPMLAAAVAWDGLAAELGMAAASFSLLISGLTAGPGSAWQGPAAAAMAAAAAPYLSWLNAATARAEGAAAGAKAAAAVYEAARAATAHPALVAANRNQLLSLVLSNLFGQNLPAIAATEASYEQLWAQDVAAMVGYHGGASTVASQLTPWQQLLSVLPPVVTAAPAGAVGVPAALAIPALGVENIGVGNFLGIGNIGNNNVGSGNTGDYNFGIGNIGNANLGNGNIGNANLGSGNAGFFNFGNGNDGNTNFGSGNAGFLNIGSGNEGSGNLGFGNAGDDNTGWGNSGDTNTGGFNSGDLNTGIGSPVTQGVANSGFGNTGTGHSGFFNSGNSGSGFQNLGNGSSGFGNASDTSSGFQNAGTALTRASSTWADSPRAWPIRAPSRLQVWRTRATTARECSIRVIISRVSSTGAPPQKKVGNSG.

4 helical membrane passes run 15 to 35 (IYAG…DGLA), 38 to 58 (LGMA…GPGS), 59 to 79 (AWQG…LSWL), and 181 to 201 (VVTA…IPAL). Residues 231-270 (NFGIGNIGNANLGNGNIGNANLGSGNAGFFNFGNGNDGNT) are 4 X 10 AA approximate repeats.

It belongs to the mycobacterial PPE family.

The protein localises to the cell membrane. This is an uncharacterized protein from Mycobacterium tuberculosis (strain ATCC 25618 / H37Rv).